The following is a 178-amino-acid chain: MKATGIVRRIDDLGRVVIPKEIRRTLRIREGDPLEIFVDRDGEVILKKYSPISELGDFAKEYADALYDSLGHSVLICDRDVYIAVSGSSKKDYLNKSISEMLERTMDQRSSVLESDAKSVQLVNGIDEDMNSYTVGPIVANGDPIGAVVIFSKDQTMGEVEHKAVETAAGFLARQMEQ.

The 47-residue stretch at 5 to 51 (GIVRRIDDLGRVVIPKEIRRTLRIREGDPLEIFVDRDGEVILKKYSP) folds into the SpoVT-AbrB domain. Positions 56-178 (GDFAKEYADA…AGFLARQMEQ (123 aa)) are GAF-like.

To B.subtilis AbrB and Abh. In terms of assembly, homotetramer. Two monomers dimerize via their N-terminal swapped-hairpin domains. These dimers further associate into tetramers through helical interactions between their C-terminal GAF-like domains.

In terms of biological role, transcriptional factor that positively regulates or negatively the expression of a large number of forespore-specific sigma G-dependent genes. May provide a mechanism of feedback control that is important for forespore development. SpoVT levels during spore formation have a major impact on the germination and the resistance of the resultant spores. The sequence is that of Stage V sporulation protein T from Bacillus subtilis (strain 168).